A 159-amino-acid polypeptide reads, in one-letter code: Ribosomal RNA large subunit methyltransferase H (159 aa).

Residues Leu-76, Gly-108, and Phe-127–Leu-132 contribute to the S-adenosyl-L-methionine site.

The protein belongs to the RNA methyltransferase RlmH family. In terms of assembly, homodimer.

It localises to the cytoplasm. It carries out the reaction pseudouridine(1915) in 23S rRNA + S-adenosyl-L-methionine = N(3)-methylpseudouridine(1915) in 23S rRNA + S-adenosyl-L-homocysteine + H(+). In terms of biological role, specifically methylates the pseudouridine at position 1915 (m3Psi1915) in 23S rRNA. The chain is Ribosomal RNA large subunit methyltransferase H from Streptococcus suis (strain 05ZYH33).